Reading from the N-terminus, the 118-residue chain is NADH-ubiquinone oxidoreductase chain 3 (118 aa).

The next 3 membrane-spanning stretches (helical) occupy residues 9–29 (IYLV…FLFA), 62–82 (LVSI…PWAV), and 87–107 (IDLF…IGSL).

This sequence belongs to the complex I subunit 3 family.

The protein resides in the mitochondrion membrane. It catalyses the reaction a ubiquinone + NADH + 5 H(+)(in) = a ubiquinol + NAD(+) + 4 H(+)(out). Its function is as follows. Core subunit of the mitochondrial membrane respiratory chain NADH dehydrogenase (Complex I) that is believed to belong to the minimal assembly required for catalysis. Complex I functions in the transfer of electrons from NADH to the respiratory chain. The immediate electron acceptor for the enzyme is believed to be ubiquinone. This is NADH-ubiquinone oxidoreductase chain 3 (ND3) from Zea mays (Maize).